The following is a 341-amino-acid chain: L-threonine 3-dehydrogenase (341 aa).

C38 is a Zn(2+) binding site. Catalysis depends on charge relay system residues T40 and H43. H63, E64, C93, C96, C99, and C107 together coordinate Zn(2+). NAD(+) contacts are provided by residues I175, D195, R200, 262 to 264 (LGI), and 286 to 287 (IY).

Belongs to the zinc-containing alcohol dehydrogenase family. In terms of assembly, homotetramer. Requires Zn(2+) as cofactor.

The protein localises to the cytoplasm. It catalyses the reaction L-threonine + NAD(+) = (2S)-2-amino-3-oxobutanoate + NADH + H(+). Its pathway is amino-acid degradation; L-threonine degradation via oxydo-reductase pathway; glycine from L-threonine: step 1/2. Its function is as follows. Catalyzes the NAD(+)-dependent oxidation of L-threonine to 2-amino-3-ketobutyrate. In Enterobacter sp. (strain 638), this protein is L-threonine 3-dehydrogenase.